The primary structure comprises 30 residues: Snake venom serine protease (30 aa).

The region spanning 1 to 30 (VIGGDECNINEHRFLVALYDPDGFLSGGIL) is the Peptidase S1 domain.

It belongs to the peptidase S1 family. Snake venom subfamily. In terms of assembly, monomer. In terms of processing, N-Glycosylated. As to expression, expressed by the venom gland.

It localises to the secreted. With respect to regulation, inhibited by diisopropylfluorophosphate (DFP). Snake venom serine protease that catalyzes the hydrolysis of arginine esters, kallikrein substrates Pro-Phe-Arg-MCA and Z-Phe-Arg-MCA. Cleaves kininogen analogs to release bradykinin. Induces contraction of the isolated rat uterus directly at high concentrations, but provokes more forceful contractions when injected in presence of bovine plasma. Shows capillary permeability-increasing activity and hypotensive activity on the anesthetized rat. The protein is Snake venom serine protease of Crotalus viridis viridis (Prairie rattlesnake).